The sequence spans 199 residues: Recombination protein RecR (199 aa).

The segment at 58–73 adopts a C4-type zinc-finger fold; that stretch reads CKKCFNFTSEDECEIC. The Toprim domain occupies 81–175; sequence KLICVVAETK…KVTRIAYGLP (95 aa).

It belongs to the RecR family.

Functionally, may play a role in DNA repair. It seems to be involved in an RecBC-independent recombinational process of DNA repair. It may act with RecF and RecO. This Prochlorococcus marinus (strain MIT 9312) protein is Recombination protein RecR.